Reading from the N-terminus, the 232-residue chain is 5'-methylthioadenosine/S-adenosylhomocysteine nucleosidase (232 aa).

The active-site Proton acceptor is Glu-12. Residues Gly-78, Val-152, and Met-173–Glu-174 contribute to the substrate site. The active-site Proton donor is Asp-197.

The protein belongs to the PNP/UDP phosphorylase family. MtnN subfamily. In terms of assembly, homodimer.

It catalyses the reaction S-adenosyl-L-homocysteine + H2O = S-(5-deoxy-D-ribos-5-yl)-L-homocysteine + adenine. The catalysed reaction is S-methyl-5'-thioadenosine + H2O = 5-(methylsulfanyl)-D-ribose + adenine. The enzyme catalyses 5'-deoxyadenosine + H2O = 5-deoxy-D-ribose + adenine. The protein operates within amino-acid biosynthesis; L-methionine biosynthesis via salvage pathway; S-methyl-5-thio-alpha-D-ribose 1-phosphate from S-methyl-5'-thioadenosine (hydrolase route): step 1/2. Catalyzes the irreversible cleavage of the glycosidic bond in both 5'-methylthioadenosine (MTA) and S-adenosylhomocysteine (SAH/AdoHcy) to adenine and the corresponding thioribose, 5'-methylthioribose and S-ribosylhomocysteine, respectively. Also cleaves 5'-deoxyadenosine, a toxic by-product of radical S-adenosylmethionine (SAM) enzymes, into 5-deoxyribose and adenine. Thus, is required for in vivo function of the radical SAM enzymes biotin synthase and lipoic acid synthase, that are inhibited by 5'-deoxyadenosine accumulation. The protein is 5'-methylthioadenosine/S-adenosylhomocysteine nucleosidase of Buchnera aphidicola subsp. Acyrthosiphon pisum (strain 5A).